Here is a 71-residue protein sequence, read N- to C-terminus: MKKDIHPNYSAVTATCTCGNTLQLNSTLGSDLHVDVCSNCHPFYTGQQKMVDTGGRVDRFNKRFGARRTTK.

Zn(2+) is bound by residues cysteine 16, cysteine 18, cysteine 37, and cysteine 40.

The protein belongs to the bacterial ribosomal protein bL31 family. Type A subfamily. In terms of assembly, part of the 50S ribosomal subunit. Zn(2+) serves as cofactor.

Its function is as follows. Binds the 23S rRNA. In Marinomonas sp. (strain MWYL1), this protein is Large ribosomal subunit protein bL31.